Reading from the N-terminus, the 291-residue chain is 4-hydroxy-tetrahydrodipicolinate synthase (291 aa).

Thr-47 lines the pyruvate pocket. Residue Tyr-134 is the Proton donor/acceptor of the active site. Lys-162 functions as the Schiff-base intermediate with substrate in the catalytic mechanism. Ile-205 is a binding site for pyruvate.

Belongs to the DapA family. Homotetramer; dimer of dimers.

The protein localises to the cytoplasm. It catalyses the reaction L-aspartate 4-semialdehyde + pyruvate = (2S,4S)-4-hydroxy-2,3,4,5-tetrahydrodipicolinate + H2O + H(+). The protein operates within amino-acid biosynthesis; L-lysine biosynthesis via DAP pathway; (S)-tetrahydrodipicolinate from L-aspartate: step 3/4. Functionally, catalyzes the condensation of (S)-aspartate-beta-semialdehyde [(S)-ASA] and pyruvate to 4-hydroxy-tetrahydrodipicolinate (HTPA). This chain is 4-hydroxy-tetrahydrodipicolinate synthase, found in Methanospirillum hungatei JF-1 (strain ATCC 27890 / DSM 864 / NBRC 100397 / JF-1).